The sequence spans 115 residues: Replication initiation control protein YabA (115 aa).

Residues His86, Cys88, Cys102, and Cys105 each contribute to the Zn(2+) site.

Belongs to the YabA family. Homotetramer. Interacts with both DnaA and DnaN, acting as a bridge between these two proteins. Requires Zn(2+) as cofactor.

It is found in the cytoplasm. It localises to the nucleoid. In terms of biological role, involved in control of chromosome replication initiation. Inhibits the cooperative binding of DnaA to the oriC region, thus negatively regulating initiation of chromosome replication. Inhibits the ability of DnaA-ATP to form a helix on DNA; does not disassemble preformed DnaA-DNA helices. Decreases the residence time of DnaA on the chromosome at its binding sites (oriC, replication forks and promoter-binding sites). Tethers DnaA to the replication machinery via the DNA polymerase beta sliding clamp subunit (dnaN). Associates with oriC and other DnaA targets on the chromosome in a DnaA-dependent manner. The chain is Replication initiation control protein YabA from Enterococcus faecalis (strain ATCC 700802 / V583).